The chain runs to 595 residues: Proline--tRNA ligase (595 aa).

The interval 1 to 22 is disordered; the sequence is MKMSTMFGATLHTAPGRSESEG.

Belongs to the class-II aminoacyl-tRNA synthetase family. ProS type 1 subfamily. As to quaternary structure, homodimer.

It is found in the cytoplasm. The catalysed reaction is tRNA(Pro) + L-proline + ATP = L-prolyl-tRNA(Pro) + AMP + diphosphate. Its function is as follows. Catalyzes the attachment of proline to tRNA(Pro) in a two-step reaction: proline is first activated by ATP to form Pro-AMP and then transferred to the acceptor end of tRNA(Pro). As ProRS can inadvertently accommodate and process non-cognate amino acids such as alanine and cysteine, to avoid such errors it has two additional distinct editing activities against alanine. One activity is designated as 'pretransfer' editing and involves the tRNA(Pro)-independent hydrolysis of activated Ala-AMP. The other activity is designated 'posttransfer' editing and involves deacylation of mischarged Ala-tRNA(Pro). The misacylated Cys-tRNA(Pro) is not edited by ProRS. In Salinispora tropica (strain ATCC BAA-916 / DSM 44818 / JCM 13857 / NBRC 105044 / CNB-440), this protein is Proline--tRNA ligase.